We begin with the raw amino-acid sequence, 406 residues long: WD repeat and SOCS box-containing protein 2 (406 aa).

Residues 70 to 89 form a disordered region; that stretch reads AKSRSSKNETKGRGSPKEKT. WD repeat units follow at residues 107 to 150, 153 to 193, 197 to 236, 239 to 278, and 293 to 332; these read PPSK…LLLN, GHQD…KQIQ, GHLQ…LIRK, GHQS…RLRS, and VHIS…PIAF. Residues 358–406 form the SOCS box domain; it reads HVQFWTAPRVLSSLKHLCRKALRSFLTTYQVLALPIPKKMKEFLTYRTF.

It functions in the pathway protein modification; protein ubiquitination. In terms of biological role, may be a substrate-recognition component of a SCF-like ECS (Elongin-Cullin-SOCS-box protein) E3 ubiquitin ligase complex which mediates the ubiquitination and subsequent proteasomal degradation of target proteins. The sequence is that of WD repeat and SOCS box-containing protein 2 (WSB2) from Bos taurus (Bovine).